The sequence spans 263 residues: Indole-3-glycerol phosphate synthase (263 aa).

Belongs to the TrpC family.

It carries out the reaction 1-(2-carboxyphenylamino)-1-deoxy-D-ribulose 5-phosphate + H(+) = (1S,2R)-1-C-(indol-3-yl)glycerol 3-phosphate + CO2 + H2O. It functions in the pathway amino-acid biosynthesis; L-tryptophan biosynthesis; L-tryptophan from chorismate: step 4/5. This Laribacter hongkongensis (strain HLHK9) protein is Indole-3-glycerol phosphate synthase.